The following is a 325-amino-acid chain: Ribose-phosphate pyrophosphokinase (325 aa).

ATP is bound by residues 45–47 (NGE) and 104–105 (RQ). H138 and D178 together coordinate Mg(2+). Residue K202 is part of the active site. D-ribose 5-phosphate-binding positions include R204, D230, and 234-238 (DTGGT).

The protein belongs to the ribose-phosphate pyrophosphokinase family. Class I subfamily. As to quaternary structure, homohexamer. It depends on Mg(2+) as a cofactor.

It is found in the cytoplasm. The catalysed reaction is D-ribose 5-phosphate + ATP = 5-phospho-alpha-D-ribose 1-diphosphate + AMP + H(+). The protein operates within metabolic intermediate biosynthesis; 5-phospho-alpha-D-ribose 1-diphosphate biosynthesis; 5-phospho-alpha-D-ribose 1-diphosphate from D-ribose 5-phosphate (route I): step 1/1. Involved in the biosynthesis of the central metabolite phospho-alpha-D-ribosyl-1-pyrophosphate (PRPP) via the transfer of pyrophosphoryl group from ATP to 1-hydroxyl of ribose-5-phosphate (Rib-5-P). The polypeptide is Ribose-phosphate pyrophosphokinase (Corynebacterium efficiens (strain DSM 44549 / YS-314 / AJ 12310 / JCM 11189 / NBRC 100395)).